We begin with the raw amino-acid sequence, 214 residues long: MAGVLLTGFEPFDGETVNPSWEVVKQLDGTMIAGQPVIARQLPCVFGEALSVLYAAIEDLQPRLVIAVGQAGGRVDISVERVAINVDDARIPDNKGQQPVDTPIVDGGPAAWFSTLPIKAIVSALRDRGIPASVSQTAGTFVCNHVMYGLLHKLQEQAGVRGGFIHIPWLPAQAAAHPGEPSMATATVREALETAIAVALRQSVDSKLGGGATH.

Catalysis depends on residues E80, C143, and H166.

Belongs to the peptidase C15 family. Homotetramer.

Its subcellular location is the cytoplasm. The enzyme catalyses Release of an N-terminal pyroglutamyl group from a polypeptide, the second amino acid generally not being Pro.. Its function is as follows. Removes 5-oxoproline from various penultimate amino acid residues except L-proline. The protein is Pyrrolidone-carboxylate peptidase of Klebsiella pneumoniae (strain 342).